The chain runs to 222 residues: 2-hydroxypent-2,4-dienoate hydratase (222 aa).

Belongs to the hydratase/decarboxylase family.

It participates in aromatic compound metabolism; benzoate degradation via hydroxylation. In terms of biological role, conversion of 2-hydroxypent-2,4-dienoate into 4-hydroxy-2-oxopentanoate. The polypeptide is 2-hydroxypent-2,4-dienoate hydratase (xylJ) (Pseudomonas putida (Arthrobacter siderocapsulatus)).